The primary structure comprises 338 residues: Eukaryotic translation initiation factor 3 subunit H (338 aa).

The region spanning 22-154 is the MPN domain; the sequence is VQCDGLAVMK…LKAYRLTPQA (133 aa).

It belongs to the eIF-3 subunit H family. In terms of assembly, component of the eukaryotic translation initiation factor 3 (eIF-3) complex. The eIF-3 complex interacts with pix. Interacts with mxt.

It localises to the cytoplasm. Functionally, component of the eukaryotic translation initiation factor 3 (eIF-3) complex, which is involved in protein synthesis of a specialized repertoire of mRNAs and, together with other initiation factors, stimulates binding of mRNA and methionyl-tRNAi to the 40S ribosome. The eIF-3 complex specifically targets and initiates translation of a subset of mRNAs involved in cell proliferation. This chain is Eukaryotic translation initiation factor 3 subunit H, found in Drosophila sechellia (Fruit fly).